Here is a 592-residue protein sequence, read N- to C-terminus: Putative RING finger protein ORF9 (592 aa).

Residues 12 to 49 (CCICLEEDIERVDTIPCQHTVCRPCYLKPMINKCPVCR) form an RING-type zinc finger. A coiled-coil region spans residues 414–441 (WELIKREELLQRRYKREEQNLKYTSNRL).

This chain is Putative RING finger protein ORF9, found in Ostreid herpesvirus 1 (isolate France) (OsHV-1).